A 258-amino-acid polypeptide reads, in one-letter code: HVA22-like protein j (258 aa).

The segment at A153–A258 is disordered. Positions Q156–S169 are enriched in polar residues. Over residues W206–P215 the composition is skewed to pro residues.

This sequence belongs to the DP1 family.

The protein is HVA22-like protein j (HVA22J) of Arabidopsis thaliana (Mouse-ear cress).